The primary structure comprises 114 residues: ATP synthase epsilon chain (114 aa).

It belongs to the ATPase epsilon chain family. In terms of assembly, F-type ATPases have 2 components, CF(1) - the catalytic core - and CF(0) - the membrane proton channel. CF(1) has five subunits: alpha(3), beta(3), gamma(1), delta(1), epsilon(1). CF(0) has three main subunits: a, b and c.

Its subcellular location is the cell membrane. Produces ATP from ADP in the presence of a proton gradient across the membrane. This chain is ATP synthase epsilon chain, found in Wolbachia pipientis wMel.